Reading from the N-terminus, the 245-residue chain is Uridylate kinase (245 aa).

ATP is bound at residue 20 to 23; sequence KLSG. Gly-60 is a UMP binding site. Positions 61 and 65 each coordinate ATP. UMP contacts are provided by residues Asp-80 and 141 to 148; that span reads AGLPYFST. Positions 175 and 178 each coordinate ATP.

The protein belongs to the UMP kinase family. Homohexamer.

Its subcellular location is the cytoplasm. It catalyses the reaction UMP + ATP = UDP + ADP. The protein operates within pyrimidine metabolism; CTP biosynthesis via de novo pathway; UDP from UMP (UMPK route): step 1/1. With respect to regulation, inhibited by UTP. In terms of biological role, catalyzes the reversible phosphorylation of UMP to UDP. The polypeptide is Uridylate kinase (Arthrobacter sp. (strain FB24)).